We begin with the raw amino-acid sequence, 456 residues long: Serine--tRNA ligase (456 aa).

2 disordered regions span residues 107-130 (PHSSVPEGRSESDNREVRRWGTPP) and 229-253 (FLENQPVAATLPSNSNSPQGGQDDD). Over residues 114–125 (GRSESDNREVRR) the composition is skewed to basic and acidic residues. Residues 239 to 248 (LPSNSNSPQG) are compositionally biased toward polar residues. L-serine is bound at residue 260-262 (TSE). 291 to 293 (RSE) is a binding site for ATP. Glutamate 314 contributes to the L-serine binding site. An ATP-binding site is contributed by 378–381 (EISS). Serine 413 contributes to the L-serine binding site.

Belongs to the class-II aminoacyl-tRNA synthetase family. Type-1 seryl-tRNA synthetase subfamily. In terms of assembly, homodimer. The tRNA molecule binds across the dimer.

Its subcellular location is the cytoplasm. It carries out the reaction tRNA(Ser) + L-serine + ATP = L-seryl-tRNA(Ser) + AMP + diphosphate + H(+). The catalysed reaction is tRNA(Sec) + L-serine + ATP = L-seryl-tRNA(Sec) + AMP + diphosphate + H(+). It participates in aminoacyl-tRNA biosynthesis; selenocysteinyl-tRNA(Sec) biosynthesis; L-seryl-tRNA(Sec) from L-serine and tRNA(Sec): step 1/1. Functionally, catalyzes the attachment of serine to tRNA(Ser). Is also able to aminoacylate tRNA(Sec) with serine, to form the misacylated tRNA L-seryl-tRNA(Sec), which will be further converted into selenocysteinyl-tRNA(Sec). This chain is Serine--tRNA ligase, found in Nitrosospira multiformis (strain ATCC 25196 / NCIMB 11849 / C 71).